We begin with the raw amino-acid sequence, 738 residues long: Polyphosphate kinase (738 aa).

Residues 1-48 (MIGNDRWVTEIETGPVTEARPDTNAREPGDRTPAAPPAATPAATTDQL) form a disordered region. A compositionally biased stretch (basic and acidic residues) spans 19-30 (ARPDTNAREPGD). Asparagine 91 contributes to the ATP binding site. The Mg(2+) site is built by arginine 427 and arginine 457. Catalysis depends on histidine 487, which acts as the Phosphohistidine intermediate. Residues tyrosine 520, arginine 620, and histidine 648 each coordinate ATP.

The protein belongs to the polyphosphate kinase 1 (PPK1) family. Mg(2+) is required as a cofactor. In terms of processing, an intermediate of this reaction is the autophosphorylated ppk in which a phosphate is covalently linked to a histidine residue through a N-P bond.

It carries out the reaction [phosphate](n) + ATP = [phosphate](n+1) + ADP. Functionally, catalyzes the reversible transfer of the terminal phosphate of ATP to form a long-chain polyphosphate (polyP). This chain is Polyphosphate kinase, found in Mycobacterium ulcerans (strain Agy99).